A 124-amino-acid chain; its full sequence is Probable glycine cleavage system H protein (124 aa).

The region spanning 23–104 is the Lipoyl-binding domain; the sequence is VATVGITDYA…PYKNWLVKIR (82 aa). Lys64 carries the N6-lipoyllysine modification.

The protein belongs to the GcvH family. As to quaternary structure, the glycine cleavage system is composed of four proteins: P, T, L and H. (R)-lipoate serves as cofactor.

In terms of biological role, the glycine cleavage system catalyzes the degradation of glycine. The H protein shuttles the methylamine group of glycine from the P protein to the T protein. This Picrophilus torridus (strain ATCC 700027 / DSM 9790 / JCM 10055 / NBRC 100828 / KAW 2/3) protein is Probable glycine cleavage system H protein.